The sequence spans 352 residues: MSGNTFGALFTVTTFGESHGPAIGCVVDGCPPGMSLTEADIQPFLDKRKPGQSKYTTQRREEDKVQILSGVFDGKTTGAPIALLIQNTDQRSRDYEDIKNLFRPGHADFTYHYKYGHRDYRGGGRSSARETAARVAAGAIARLYLKRYLNLDIIGYLQQMGDLKLQFENENEIDKNPFFCPNNKQIQELADYVDRLRRQGDSVGARVKILARGVPTGLGDPVFDKLDATLAYAMMSINAVKGVEIGAGFNAVEQLGSHHRDQMTAKGFLSNHAGGILGGIATGQPIEVSIALKPTSSITTPGQTINTEGEEVTVVTKGRHDPCVGIRAVPIAEAMMALVLMDHYLRHKAQCK.

An NADP(+)-binding site is contributed by R48. Residues 125-127, 238-239, G278, 293-297, and R319 contribute to the FMN site; these read RSS, NA, and KPTSS.

Belongs to the chorismate synthase family. Homotetramer. Requires FMNH2 as cofactor.

The enzyme catalyses 5-O-(1-carboxyvinyl)-3-phosphoshikimate = chorismate + phosphate. Its pathway is metabolic intermediate biosynthesis; chorismate biosynthesis; chorismate from D-erythrose 4-phosphate and phosphoenolpyruvate: step 7/7. Functionally, catalyzes the anti-1,4-elimination of the C-3 phosphate and the C-6 proR hydrogen from 5-enolpyruvylshikimate-3-phosphate (EPSP) to yield chorismate, which is the branch point compound that serves as the starting substrate for the three terminal pathways of aromatic amino acid biosynthesis. This reaction introduces a second double bond into the aromatic ring system. The chain is Chorismate synthase from Legionella pneumophila (strain Lens).